A 397-amino-acid polypeptide reads, in one-letter code: Phosphoglycerate kinase (397 aa).

Residues 21-23 (DFN), Arg-36, 59-62 (HCGR), Arg-118, and Arg-151 each bind substrate. Residues Lys-201, Glu-323, and 353-356 (GGDT) each bind ATP.

It belongs to the phosphoglycerate kinase family. Monomer.

The protein resides in the cytoplasm. The enzyme catalyses (2R)-3-phosphoglycerate + ATP = (2R)-3-phospho-glyceroyl phosphate + ADP. It participates in carbohydrate degradation; glycolysis; pyruvate from D-glyceraldehyde 3-phosphate: step 2/5. The polypeptide is Phosphoglycerate kinase (Bartonella quintana (strain Toulouse) (Rochalimaea quintana)).